Consider the following 300-residue polypeptide: Heme A synthase (300 aa).

Topologically, residues methionine 1–lysine 8 are cytoplasmic. Residues tryptophan 9–threonine 29 form a helical membrane-spanning segment. Residues lysine 30 to arginine 64 are Extracellular-facing. Residues cysteine 37 and cysteine 44 are joined by a disulfide bond. Residue glutamate 60 is part of the active site. Residue histidine 63 coordinates heme o. The helical transmembrane segment at glycine 65–isoleucine 85 threads the bilayer. Residues glycine 86–lysine 92 lie on the Cytoplasmic side of the membrane. Residues phenylalanine 93–valine 113 form a helical membrane-spanning segment. The Extracellular segment spans residues methionine 114 to alanine 123. The chain crosses the membrane as a helical span at residues leucine 124–phenylalanine 144. Histidine 125 provides a ligand contact to heme o. At glutamate 145–arginine 163 the chain is on the cytoplasmic side. Residues histidine 164–histidine 184 form a helical membrane-spanning segment. Over glutamate 185–threonine 218 the chain is Extracellular. A disulfide bridge connects residues cysteine 191 and cysteine 197. Histidine 216 is a binding site for heme b. Residues leucine 219–alanine 239 form a helical membrane-spanning segment. At glutamine 240–methionine 249 the chain is on the cytoplasmic side. A helical transmembrane segment spans residues isoleucine 250–valine 270. Over asparagine 271 to alanine 275 the chain is Extracellular. A helical membrane pass occupies residues leucine 276 to isoleucine 296. Histidine 278 contributes to the heme b binding site. Over serine 297 to lysine 300 the chain is Cytoplasmic.

This sequence belongs to the COX15/CtaA family. Type 1 subfamily. Interacts with CtaB. The cofactor is heme b.

The protein resides in the cell membrane. It carries out the reaction Fe(II)-heme o + 2 A + H2O = Fe(II)-heme a + 2 AH2. It functions in the pathway porphyrin-containing compound metabolism; heme A biosynthesis; heme A from heme O: step 1/1. Functionally, catalyzes the conversion of heme O to heme A by two successive hydroxylations of the methyl group at C8. The first hydroxylation forms heme I, the second hydroxylation results in an unstable dihydroxymethyl group, which spontaneously dehydrates, resulting in the formyl group of heme A. This chain is Heme A synthase, found in Macrococcus caseolyticus (strain JCSC5402) (Macrococcoides caseolyticum).